Consider the following 402-residue polypeptide: p-cumate 2,3-dioxygenase system, ferredoxin--NAD(+) reductase component (402 aa).

Residues alanine 16, lysine 51, valine 83, arginine 131, and aspartate 275 each contribute to the FAD site.

It belongs to the FAD-dependent oxidoreductase family. As to quaternary structure, the p-cumate 2,3-dioxygenase multicomponent enzyme system is composed of an electron transfer component and a dioxygenase component (iron sulfur protein (ISP)). The electron transfer component is composed of a ferredoxin reductase (CmtAa) and a ferredoxin (CmtAd), and the dioxygenase component is formed of a large alpha subunit (CmtAb) and a small beta subunit (CmtAc). Requires FAD as cofactor.

It carries out the reaction 2 reduced [2Fe-2S]-[ferredoxin] + NAD(+) + H(+) = 2 oxidized [2Fe-2S]-[ferredoxin] + NADH. It participates in aromatic compound metabolism; p-cumate degradation; acetaldehyde and pyruvate from p-cumate. Component of the p-cumate 2,3-dioxygenase multicomponent enzyme system which catalyzes the incorporation of both atoms of molecular oxygen into p-cumate to form cis-2,3-dihydroxy-2,3-dihydro-p-cumate. Ferredoxin reductase catalyzes the transfer of electrons from NADH to ferredoxin (CmtAd). In Pseudomonas putida (Arthrobacter siderocapsulatus), this protein is p-cumate 2,3-dioxygenase system, ferredoxin--NAD(+) reductase component.